The chain runs to 336 residues: Nuclear envelope-associated protein 3 (336 aa).

Coiled-coil stretches lie at residues 14 to 87 and 128 to 261; these read LKDL…IRAS and VLSK…LKKK. Residues 240–261 carry the Bipartite nuclear localization signal motif; sequence KTKELEDQVENQRRIDQELKKK. A helical membrane pass occupies residues 313-330; that stretch reads LWDKSGFKIVVSMSMLIL.

Forms homomers and heteromers with NEAP1 and NEAP2. Interacts with SUN1 and SUN2.

It is found in the nucleus inner membrane. Its subcellular location is the nucleus. The protein resides in the nucleoplasm. The protein is Nuclear envelope-associated protein 3 of Arabidopsis thaliana (Mouse-ear cress).